We begin with the raw amino-acid sequence, 103 residues long: MSGRGKGGKGLGKGGAKRHRKILRDNIQGITKPAIRRLARRGGVKRISGLIYDETRGVLKLFLESVIRDSVTYTEHAKRKTVTSLDVVYALKRQGRTLYGFGA.

A compositionally biased stretch (gly residues) spans 1–14; it reads MSGRGKGGKGLGKG. A disordered region spans residues 1–20; it reads MSGRGKGGKGLGKGGAKRHR. Lys6 carries the post-translational modification N6-acetyl-N6-methyllysine; alternate. 3 positions are modified to N6-methyllysine; alternate: Lys6, Lys9, and Lys13. The residue at position 13 (Lys13) is an N6-acetyl-N6-methyllysine; alternate. The DNA-binding element occupies 17 to 21; sequence KRHRK. Lys92 carries the N6-glutaryllysine modification.

It belongs to the histone H4 family. In terms of assembly, the nucleosome is a histone octamer containing two molecules each of H2A, H2B, H3 and H4 assembled in one H3-H4 heterotetramer and two H2A-H2B heterodimers. The octamer wraps approximately 147 bp of DNA. In terms of processing, glutarylation at Lys-92 (H4K91glu) destabilizes nucleosomes by promoting dissociation of the H2A-H2B dimers from nucleosomes.

The protein localises to the nucleus. Its subcellular location is the chromosome. Functionally, core component of nucleosome. Nucleosomes wrap and compact DNA into chromatin, limiting DNA accessibility to the cellular machineries which require DNA as a template. Histones thereby play a central role in transcription regulation, DNA repair, DNA replication and chromosomal stability. DNA accessibility is regulated via a complex set of post-translational modifications of histones, also called histone code, and nucleosome remodeling. The protein is Histone H4 (HHF1) of Mycosarcoma maydis (Corn smut fungus).